The chain runs to 259 residues: Putative deoxyribonuclease TATDN1 homolog (259 aa).

A divalent metal cation contacts are provided by Glu-82, His-116, His-138, and Asp-186.

The protein belongs to the metallo-dependent hydrolases superfamily. TatD-type hydrolase family. A divalent metal cation serves as cofactor.

It is found in the nucleus. In terms of biological role, putative deoxyribonuclease. The polypeptide is Putative deoxyribonuclease TATDN1 homolog (Vairimorpha ceranae (strain BRL01) (Microsporidian parasite)).